The primary structure comprises 200 residues: MIHLLLVVAAYLLGSLSFAVIVSRAMGLPDPRSFGSGNPGATNVLRTGRKTAAILTLLGDALKGWVAVVAARGLAAQFGLDDDIVLLCALAAFIGHLFPVFFGFQGGKGVATALGILVALDPWLGLACLATWVAMALVFRISSLSALVTAVLAPVYAGLLLGWNDSATTVLVIALLLVYRHKANLLKLVTGQEARIGKRS.

The next 5 membrane-spanning stretches (helical) occupy residues 2-22 (IHLL…AVIV), 51-71 (TAAI…VVAA), 84-104 (IVLL…FFGF), 113-133 (ALGI…ATWV), and 143-163 (SLSA…LLGW).

Belongs to the PlsY family. In terms of assembly, probably interacts with PlsX.

Its subcellular location is the cell inner membrane. It catalyses the reaction an acyl phosphate + sn-glycerol 3-phosphate = a 1-acyl-sn-glycero-3-phosphate + phosphate. It participates in lipid metabolism; phospholipid metabolism. Functionally, catalyzes the transfer of an acyl group from acyl-phosphate (acyl-PO(4)) to glycerol-3-phosphate (G3P) to form lysophosphatidic acid (LPA). This enzyme utilizes acyl-phosphate as fatty acyl donor, but not acyl-CoA or acyl-ACP. The sequence is that of Glycerol-3-phosphate acyltransferase from Thiobacillus denitrificans (strain ATCC 25259 / T1).